The primary structure comprises 157 residues: uncharacterized protein (157 aa).

Positions 1-19 (MRKYLIILVLLLFLSSSFG) are cleaved as a signal peptide.

This is an uncharacterized protein from Methanocaldococcus jannaschii (strain ATCC 43067 / DSM 2661 / JAL-1 / JCM 10045 / NBRC 100440) (Methanococcus jannaschii).